Here is a 346-residue protein sequence, read N- to C-terminus: tRNA N6-adenosine threonylcarbamoyltransferase (346 aa).

Fe cation-binding residues include His109, His113, and Tyr135. Substrate is bound by residues 135 to 139 (YVSGG), Asp167, Gly180, Glu184, and Asn263. Asp291 is a Fe cation binding site.

The protein belongs to the KAE1 / TsaD family. Monomer. Component of the KEOPS complex that consists of Kae1, Bud32, Cgi121 and Pcc1; the whole complex dimerizes. The cofactor is Fe(2+).

It is found in the cytoplasm. It carries out the reaction L-threonylcarbamoyladenylate + adenosine(37) in tRNA = N(6)-L-threonylcarbamoyladenosine(37) in tRNA + AMP + H(+). Functionally, required for the formation of a threonylcarbamoyl group on adenosine at position 37 (t(6)A37) in tRNAs that read codons beginning with adenine. Is a component of the KEOPS complex that is probably involved in the transfer of the threonylcarbamoyl moiety of threonylcarbamoyl-AMP (TC-AMP) to the N6 group of A37. Kae1 likely plays a direct catalytic role in this reaction, but requires other protein(s) of the complex to fulfill this activity. In Methanopyrus kandleri (strain AV19 / DSM 6324 / JCM 9639 / NBRC 100938), this protein is tRNA N6-adenosine threonylcarbamoyltransferase.